We begin with the raw amino-acid sequence, 243 residues long: Uridylate kinase (243 aa).

15-18 (KMSG) contacts ATP. Gly57 is a UMP binding site. ATP is bound by residues Gly58 and Arg62. UMP is bound by residues Asp77 and 138-145 (TGNPLVTT). Thr165, Asn166, Tyr171, and Asp174 together coordinate ATP.

It belongs to the UMP kinase family. As to quaternary structure, homohexamer.

It is found in the cytoplasm. It catalyses the reaction UMP + ATP = UDP + ADP. It functions in the pathway pyrimidine metabolism; CTP biosynthesis via de novo pathway; UDP from UMP (UMPK route): step 1/1. With respect to regulation, inhibited by UTP. Functionally, catalyzes the reversible phosphorylation of UMP to UDP. The polypeptide is Uridylate kinase (Coxiella burnetii (strain RSA 493 / Nine Mile phase I)).